Consider the following 329-residue polypeptide: Putative 1-aminocyclopropane-1-carboxylate deaminase (329 aa).

Lysine 54 is modified (N6-(pyridoxal phosphate)lysine).

Belongs to the ACC deaminase/D-cysteine desulfhydrase family. It depends on pyridoxal 5'-phosphate as a cofactor.

It carries out the reaction 1-aminocyclopropane-1-carboxylate + H2O = 2-oxobutanoate + NH4(+). The polypeptide is Putative 1-aminocyclopropane-1-carboxylate deaminase (Pyrococcus furiosus (strain ATCC 43587 / DSM 3638 / JCM 8422 / Vc1)).